A 545-amino-acid chain; its full sequence is Chaperonin GroEL (545 aa).

ATP contacts are provided by residues 30 to 33, K51, 87 to 91, G413, 477 to 479, and D493; these read TLGP, DGTTT, and NAA.

It belongs to the chaperonin (HSP60) family. As to quaternary structure, forms a cylinder of 14 subunits composed of two heptameric rings stacked back-to-back. Interacts with the co-chaperonin GroES.

It localises to the cytoplasm. It carries out the reaction ATP + H2O + a folded polypeptide = ADP + phosphate + an unfolded polypeptide.. In terms of biological role, together with its co-chaperonin GroES, plays an essential role in assisting protein folding. The GroEL-GroES system forms a nano-cage that allows encapsulation of the non-native substrate proteins and provides a physical environment optimized to promote and accelerate protein folding. The protein is Chaperonin GroEL of Pseudomonas putida (Arthrobacter siderocapsulatus).